A 63-amino-acid polypeptide reads, in one-letter code: Cytochrome c oxidase subunit 5C (63 aa).

A helical membrane pass occupies residues 16–34; sequence VVKEIFIGLTLGLVAGGMW.

This sequence belongs to the cytochrome c oxidase subunit 5C family.

The protein resides in the mitochondrion inner membrane. Its function is as follows. This protein is one of the nuclear-coded polypeptide chains of cytochrome c oxidase, the terminal oxidase in mitochondrial electron transport. The sequence is that of Cytochrome c oxidase subunit 5C (COX5C) from Hordeum vulgare (Barley).